Reading from the N-terminus, the 443-residue chain is KASVGFKAGVKDYRLTYYTPEYQTKDTDILAAFRVTPQPGVPPEEAGAAVAAESSTGTWTTVWTDGLTSLDRYKGRCYDIEPVAGEESQFIAYVAYPLDLFEEGSVTNLFTSIVGNVFGFKALRALRLEDLRIPPAYSKTFQGPPHGIQVERDKLNKYGRPLLGCTIKPKLGLSAKNYGRAVYECLRGGLDFTKDDENVNSQPFMRWRDRFVFCAEAINKAQAETGEIKGHYLNATAGTCEEMMKRAIFARELGVPIVMHDYLTGGFTANTSLAHYCRDNGLLLHIHRAMHAVIDRQRNHGMHFRVLAKALRMSGGDHVHAGTVVGKLEGERDVTLGFVDLLRDDFIEKDRSRGIYFTQDWVSMPGVLPVASGGIHVWHMPALTEIFGDDSVLQFGGGTLGHPWGNAPGAVANRVAVEACVQARNEGRDLAREGNEVIREACK.

Lys7 bears the N6,N6,N6-trimethyllysine mark. Asn116 and Thr166 together coordinate substrate. The active-site Proton acceptor is Lys168. Position 170 (Lys170) interacts with substrate. Positions 194, 196, and 197 each coordinate Mg(2+). At Lys194 the chain carries N6-carboxylysine. The active-site Proton acceptor is the His287. Arg288, His320, and Ser372 together coordinate substrate.

It belongs to the RuBisCO large chain family. Type I subfamily. In terms of assembly, heterohexadecamer of 8 large chains and 8 small chains; disulfide-linked. The disulfide link is formed within the large subunit homodimers. It depends on Mg(2+) as a cofactor. The disulfide bond which can form in the large chain dimeric partners within the hexadecamer appears to be associated with oxidative stress and protein turnover.

The protein localises to the plastid. The protein resides in the chloroplast. It catalyses the reaction 2 (2R)-3-phosphoglycerate + 2 H(+) = D-ribulose 1,5-bisphosphate + CO2 + H2O. It carries out the reaction D-ribulose 1,5-bisphosphate + O2 = 2-phosphoglycolate + (2R)-3-phosphoglycerate + 2 H(+). Functionally, ruBisCO catalyzes two reactions: the carboxylation of D-ribulose 1,5-bisphosphate, the primary event in carbon dioxide fixation, as well as the oxidative fragmentation of the pentose substrate in the photorespiration process. Both reactions occur simultaneously and in competition at the same active site. The polypeptide is Ribulose bisphosphate carboxylase large chain (Abies sachalinensis (Sakhalin fir)).